We begin with the raw amino-acid sequence, 1148 residues long: Trafficking protein particle complex subunit 9 (1148 aa).

Ser-566 and Ser-953 each carry phosphoserine.

This sequence belongs to the NIBP family. In terms of assembly, component of the multisubunit TRAPP (transport protein particle) complex, which includes at least TRAPPC2, TRAPPC2L, TRAPPC3, TRAPPC3L, TRAPPC4, TRAPPC5, TRAPPC8, TRAPPC9, TRAPPC10, TRAPPC11 and TRAPPC12. Directly interacts with IKBKB and MAP3K14. As to expression, expressed at high levels in muscle and kidney and to a lower extent in brain, heart and placenta.

The protein localises to the golgi apparatus. It is found in the cis-Golgi network. It localises to the endoplasmic reticulum. Its subcellular location is the cytoplasm. In terms of biological role, functions as an activator of NF-kappa-B through increased phosphorylation of the IKK complex. May function in neuronal cells differentiation. May play a role in vesicular transport from endoplasmic reticulum to Golgi. The protein is Trafficking protein particle complex subunit 9 (TRAPPC9) of Homo sapiens (Human).